The sequence spans 1371 residues: uncharacterized protein (1371 aa).

The disordered stretch occupies residues 1020–1048 (WYLSSSKNTPEPRPDPEPTPEGHDNNLRP). Residues 1029–1046 (PEPRPDPEPTPEGHDNNL) show a composition bias toward basic and acidic residues. The Autotransporter domain maps to 1083–1371 (GEPKATSMWM…SAMLGVKYTF (289 aa)).

The protein localises to the cell outer membrane. This is an uncharacterized protein from Escherichia coli (strain K12).